Consider the following 472-residue polypeptide: Glutamate--tRNA ligase (472 aa).

The 'HIGH' region signature appears at 18 to 28; it reads PSPTGYLHIGG. Residues 122-138 are compositionally biased toward basic and acidic residues; sequence RARGEKPRYDGRWRPEP. Positions 122–150 are disordered; that stretch reads RARGEKPRYDGRWRPEPGKTLPVPPSGVQ. Positions 250–254 match the 'KMSKS' region motif; the sequence is KLSKR. K253 contacts ATP.

It belongs to the class-I aminoacyl-tRNA synthetase family. Glutamate--tRNA ligase type 1 subfamily. Monomer.

The protein resides in the cytoplasm. It catalyses the reaction tRNA(Glu) + L-glutamate + ATP = L-glutamyl-tRNA(Glu) + AMP + diphosphate. In terms of biological role, catalyzes the attachment of glutamate to tRNA(Glu) in a two-step reaction: glutamate is first activated by ATP to form Glu-AMP and then transferred to the acceptor end of tRNA(Glu). In Thiobacillus denitrificans (strain ATCC 25259 / T1), this protein is Glutamate--tRNA ligase.